We begin with the raw amino-acid sequence, 165 residues long: Lipoprotein signal peptidase (165 aa).

Transmembrane regions (helical) follow at residues 6–26 (SSVE…LLII), 68–88 (GKID…LFYF), and 95–115 (ISFL…GNMI). Active-site residues include D125 and D141. Residues 132–152 (IWSFIFNFADVWINIGVVLII) traverse the membrane as a helical segment.

Belongs to the peptidase A8 family.

Its subcellular location is the cell inner membrane. It catalyses the reaction Release of signal peptides from bacterial membrane prolipoproteins. Hydrolyzes -Xaa-Yaa-Zaa-|-(S,diacylglyceryl)Cys-, in which Xaa is hydrophobic (preferably Leu), and Yaa (Ala or Ser) and Zaa (Gly or Ala) have small, neutral side chains.. It functions in the pathway protein modification; lipoprotein biosynthesis (signal peptide cleavage). Its function is as follows. This protein specifically catalyzes the removal of signal peptides from prolipoproteins. This Fusobacterium nucleatum subsp. nucleatum (strain ATCC 25586 / DSM 15643 / BCRC 10681 / CIP 101130 / JCM 8532 / KCTC 2640 / LMG 13131 / VPI 4355) protein is Lipoprotein signal peptidase.